We begin with the raw amino-acid sequence, 166 residues long: Large ribosomal subunit protein uL10 (166 aa).

Belongs to the universal ribosomal protein uL10 family. Part of the ribosomal stalk of the 50S ribosomal subunit. The N-terminus interacts with L11 and the large rRNA to form the base of the stalk. The C-terminus forms an elongated spine to which L12 dimers bind in a sequential fashion forming a multimeric L10(L12)X complex.

Its function is as follows. Forms part of the ribosomal stalk, playing a central role in the interaction of the ribosome with GTP-bound translation factors. The protein is Large ribosomal subunit protein uL10 of Shewanella sediminis (strain HAW-EB3).